The following is a 1642-amino-acid chain: Cortactin-binding protein 2 (1642 aa).

5 disordered regions span residues 1-27 (MATDGASCEPDFSRAPEDAAGAPAEAA), 203-222 (KKKTSALEEELATEKRRSTE), 366-433 (IGAS…HPGL), 446-471 (GSNANDPDQNGNTTQSPPSRDVSPTS), and 491-611 (RFTS…PSID). A coiled-coil region spans residues 119 to 276 (RKMQERMSTQ…EQLKRGTDSK (158 aa)). The span at 385–394 (GPSTGSTADL) shows a compositional bias: polar residues. Positions 395–407 (TSSPTPVPSTVSP) are enriched in low complexity. Arginine 491 carries the post-translational modification Asymmetric dimethylarginine. A compositionally biased stretch (pro residues) spans 497 to 506 (AGAPPRPGAP). Polar residues predominate over residues 576 to 586 (TVASPPSTLPQ). ANK repeat units lie at residues 702-732 (GRPTLLQQAAAQGNVTLLSMLLNEEGLDINY), 736-765 (DGHSALYSAAKNGHTDCVRLLLNAEAQVNA), 769-798 (NGFTPLCAAAAQGHFKCVELLIAYDANINH), 802-831 (GGQTPLYLACKNGNKECIKLLLEAGTDRSV), 835-864 (DGWTPIHAAVDTGNVDSLKLLMYHRAPAHG), and 904-934 (EGWTAAHIAASKGFKNCLEVLCRHGGLEPER). The tract at residues 1441–1469 (SGAWRKVSTSPRKKSGRFSSPTWNKPDLS) is disordered. Serine 1513 is modified (phosphoserine). The disordered stretch occupies residues 1545–1642 (LRRFDSSGNN…NSRDLEPTQK (98 aa)). Composition is skewed to polar residues over residues 1552-1563 (GNNPVFSATVNN) and 1571-1588 (KEVSPLSSHQTTECSNSK). Positions 1613-1627 (SQNTKRSSSSSNTRQ) are enriched in low complexity.

As to quaternary structure, interacts with CTTN/cortactin SH3 domain. Interacts with STRN, STRN4/zinedin and MOB4/phocein; this interactions mediate the association with the STRIPAK core complex and may regulate dendritic spine distribution of the STRIPAK complex in hippocampal neurons. Activation of glutamate receptors weakens the interaction with STRN and STRN4.

Its subcellular location is the cytoplasm. It is found in the cell cortex. The protein localises to the cell projection. It localises to the dendritic spine. Its function is as follows. Regulates the dendritic spine distribution of CTTN/cortactin in hippocampal neurons, and thus controls dendritic spinogenesis and dendritic spine maintenance. Associates with the striatin-interacting phosphatase and kinase (STRIPAK) core complex to regulate dendritic spine distribution of the STRIPAK complex in hippocampal neurons. This chain is Cortactin-binding protein 2 (CTTNBP2), found in Muntiacus muntjak (Barking deer).